The primary structure comprises 239 residues: tRNA (guanine-N(7)-)-methyltransferase (239 aa).

E69, E94, D121, and D144 together coordinate S-adenosyl-L-methionine. D144 is a catalytic residue. Residue K148 coordinates substrate. Residues 150 to 155 (RHNKRR) form an interaction with RNA region. Substrate contacts are provided by residues D180 and 217–220 (TKFE).

This sequence belongs to the class I-like SAM-binding methyltransferase superfamily. TrmB family. Monomer.

It carries out the reaction guanosine(46) in tRNA + S-adenosyl-L-methionine = N(7)-methylguanosine(46) in tRNA + S-adenosyl-L-homocysteine. The protein operates within tRNA modification; N(7)-methylguanine-tRNA biosynthesis. In terms of biological role, catalyzes the formation of N(7)-methylguanine at position 46 (m7G46) in tRNA. In Shigella boydii serotype 4 (strain Sb227), this protein is tRNA (guanine-N(7)-)-methyltransferase.